Reading from the N-terminus, the 586-residue chain is Isocitrate dehydrogenase kinase/phosphatase (586 aa).

Residues 316 to 322 (ARGDRGL) and lysine 337 contribute to the ATP site. Aspartate 372 is a catalytic residue.

Belongs to the AceK family.

It localises to the cytoplasm. The catalysed reaction is L-seryl-[isocitrate dehydrogenase] + ATP = O-phospho-L-seryl-[isocitrate dehydrogenase] + ADP + H(+). In terms of biological role, bifunctional enzyme which can phosphorylate or dephosphorylate isocitrate dehydrogenase (IDH) on a specific serine residue. This is a regulatory mechanism which enables bacteria to bypass the Krebs cycle via the glyoxylate shunt in response to the source of carbon. When bacteria are grown on glucose, IDH is fully active and unphosphorylated, but when grown on acetate or ethanol, the activity of IDH declines drastically concomitant with its phosphorylation. The sequence is that of Isocitrate dehydrogenase kinase/phosphatase from Anaeromyxobacter dehalogenans (strain 2CP-C).